Here is a 438-residue protein sequence, read N- to C-terminus: Protein maelstrom 1 (438 aa).

Positions 2 to 69 form a DNA-binding region, HMG box; sequence APKKRNGFMT…LERTAKKERL (68 aa). A disordered region spans residues 374-438; it reads KEMGSRDLSP…NMGAGKKIAR (65 aa). A compositionally biased stretch (polar residues) spans 381–391; it reads LSPSSSHQSVS.

It belongs to the maelstrom family.

Its subcellular location is the cytoplasm. The protein localises to the nucleus. Its function is as follows. Involved both in the piRNA and miRNA metabolic processes. As a component of the meiotic nuage, plays a central role during oogenesis by repressing transposable elements and preventing their mobilization, which is essential for the germline integrity. Repression of transposable elements is mediated via the piRNA metabolic process, which mediates the repression of transposable elements during meiosis by forming complexes composed of piRNAs and Piwi proteins and governs the repression of transposons. As a nuclear component, it is required for proper differentiation in the germline stem cell (GSC) lineage by repressing microRNA-7 (miR-7), thereby acting as an indirect regulator of bag-of-marbles (Bam). Acts by binding to the promoter of miR-7 gene and repressing its expression; miR-7 repression alleviates the Bam repression by miR-7, thereby allowing differentiation in the germline stem cell (GSC) lineage. This chain is Protein maelstrom 1 (mael1), found in Drosophila persimilis (Fruit fly).